The sequence spans 657 residues: Methionine--tRNA ligase (657 aa).

The 'HIGH' region motif lies at 13-23; sequence YYPSGNLHIGH. The short motif at 308–312 is the 'KMSKS' region element; it reads KMSKS. An ATP-binding site is contributed by lysine 311. The tRNA-binding domain occupies 557 to 657; that stretch reads DFDKVEIKAA…SAIPNGAVIK (101 aa).

The protein belongs to the class-I aminoacyl-tRNA synthetase family. MetG type 2B subfamily. In terms of assembly, homodimer.

Its subcellular location is the cytoplasm. The catalysed reaction is tRNA(Met) + L-methionine + ATP = L-methionyl-tRNA(Met) + AMP + diphosphate. Functionally, is required not only for elongation of protein synthesis but also for the initiation of all mRNA translation through initiator tRNA(fMet) aminoacylation. The polypeptide is Methionine--tRNA ligase (Staphylococcus aureus (strain Mu50 / ATCC 700699)).